Here is a 770-residue protein sequence, read N- to C-terminus: Proprotein convertase subtilisin/kexin type 7 (770 aa).

The N-terminal stretch at 1–36 (MPKGRQKVPHLDAHLGLPICLWLELAIFFLVPQVMG) is a signal peptide. Residues 37 to 140 (LSEAGGLDIL…EQTLLKRAKR (104 aa)) constitute a propeptide that is removed on maturation. The Extracellular portion of the chain corresponds to 141–666 (SIHFNDPKYP…YTITPNTLKT (526 aa)). The Peptidase S8 domain maps to 152–472 (QWHLNNRRSP…FGLLNAWRLV (321 aa)). N-linked (GlcNAc...) asparagine glycans are attached at residues N166 and N174. D186 functions as the Charge relay system in the catalytic mechanism. Residues 195-228 (DIAPNYSPEGSYDLNSNDPDPMPHPDEENGNHHG) are disordered. Over residues 215 to 225 (PMPHPDEENGN) the composition is skewed to basic and acidic residues. The active-site Charge relay system is H227. The N-linked (GlcNAc...) asparagine glycan is linked to N240. The active-site Charge relay system is the S405. Positions 480–617 (SVPYLASYVS…QLTLYGSMWS (138 aa)) constitute a P/Homo B domain. N-linked (GlcNAc...) asparagine glycosylation is present at N510. A helical transmembrane segment spans residues 667-687 (LVLVGCFSVFWTIYYMLEVCL). The Cytoplasmic segment spans residues 688–770 (SQRNKASTHG…LLQGKSGQIC (83 aa)).

Belongs to the peptidase S8 family. Requires Ca(2+) as cofactor. In terms of tissue distribution, widely expressed. Expressed in brain, lung, muscle, heart, liver, kidney, spleen and thymus.

Its subcellular location is the golgi apparatus. It localises to the trans-Golgi network membrane. Its activity is regulated as follows. Inhibited by zinc and copper. In terms of biological role, serine endoprotease that processes various proproteins by cleavage at paired basic amino acids, recognizing the RXXX[KR]R consensus motif. Likely functions in the constitutive secretory pathway. The protein is Proprotein convertase subtilisin/kexin type 7 (Pcsk7) of Mus musculus (Mouse).